We begin with the raw amino-acid sequence, 111 residues long: Secreted RxLR effector protein 81 (111 aa).

An N-terminal signal peptide occupies residues 1–16 (MLVSMLLIIFPNGVSL). N-linked (GlcNAc...) asparagine glycosylation occurs at asparagine 52. The interval 73-92 (KKFSSSDEDKSRDVRRRLRP) is disordered. The short motif at 88–91 (RRLR) is the RxLR-dEER element.

Belongs to the RxLR effector family.

The protein resides in the secreted. The protein localises to the host nucleus. Its subcellular location is the host cytoplasm. In terms of biological role, secreted effector that partially suppresses the host cell death induced by cell death-inducing proteins. The sequence is that of Secreted RxLR effector protein 81 from Plasmopara viticola (Downy mildew of grapevine).